The following is a 310-amino-acid chain: MEIPHIPVLLNEVQEIFKNLKTGYFLDCTLGFGGHSEALLKNHPDLKFIACDQDQQALEFSKKRLKDFHNRITFVQSNFSEVLEKISHKEELRGILADIGVSSFQLDNNERGFSVNSDFLDMRMNQNSKISAYEIINTYTKEQLTSIFKDYGELHDAHFIAEKICLERSKNPIKSAKELYQIIGKGKQNHRKISKATLAFQAIRIEVNQELKVLKDFLEHLENLKPKNCILAIISFHSLEDRIVKQFFKKWSKNCICNEKIMRCECGNNHSLGQIITKKAISASKEELLKNSRSSCAKMRAFYFNNLDNK.

S-adenosyl-L-methionine is bound by residues Gly33–His35, Asp52, Phe79, Asp98, and Gln105.

This sequence belongs to the methyltransferase superfamily. RsmH family.

The protein localises to the cytoplasm. The catalysed reaction is cytidine(1402) in 16S rRNA + S-adenosyl-L-methionine = N(4)-methylcytidine(1402) in 16S rRNA + S-adenosyl-L-homocysteine + H(+). Specifically methylates the N4 position of cytidine in position 1402 (C1402) of 16S rRNA. This is Ribosomal RNA small subunit methyltransferase H from Campylobacter jejuni subsp. jejuni serotype O:23/36 (strain 81-176).